Consider the following 2021-residue polypeptide: HEAT repeat-containing protein 5A (2021 aa).

HEAT repeat units follow at residues 795–836 (SQRP…HLAS) and 1059–1096 (VNLSSLVPTLCVHLYSPHLPLRRAVLACLRQLAQREAA). 2 disordered regions span residues 1503–1528 (EGNGHLSRPVTPTSMGQERGSQLPAD) and 1989–2012 (RGNQESLKPKAPSRGTMGGGHGSP). Positions 1512 to 1522 (VTPTSMGQERG) are enriched in polar residues.

This sequence belongs to the HEATR5 family.

The chain is HEAT repeat-containing protein 5A (heatr5a) from Xenopus tropicalis (Western clawed frog).